A 175-amino-acid polypeptide reads, in one-letter code: Alkyl hydroperoxide reductase AhpD (175 aa).

The Proton donor role is filled by cysteine 131. A disulfide bridge links cysteine 131 with cysteine 134. Catalysis depends on cysteine 134, which acts as the Cysteine sulfenic acid (-SOH) intermediate.

It belongs to the AhpD family.

The catalysed reaction is N(6)-[(R)-dihydrolipoyl]-L-lysyl-[lipoyl-carrier protein] + a hydroperoxide = N(6)-[(R)-lipoyl]-L-lysyl-[lipoyl-carrier protein] + an alcohol + H2O. Functionally, antioxidant protein with alkyl hydroperoxidase activity. Required for the reduction of the AhpC active site cysteine residues and for the regeneration of the AhpC enzyme activity. In Brucella abortus (strain 2308), this protein is Alkyl hydroperoxide reductase AhpD.